A 341-amino-acid chain; its full sequence is Ribosomal RNA small subunit methyltransferase C (341 aa).

Belongs to the methyltransferase superfamily. RsmC family. Monomer.

It localises to the cytoplasm. It catalyses the reaction guanosine(1207) in 16S rRNA + S-adenosyl-L-methionine = N(2)-methylguanosine(1207) in 16S rRNA + S-adenosyl-L-homocysteine + H(+). In terms of biological role, specifically methylates the guanine in position 1207 of 16S rRNA in the 30S particle. The polypeptide is Ribosomal RNA small subunit methyltransferase C (Shewanella halifaxensis (strain HAW-EB4)).